The primary structure comprises 375 residues: Chaperone protein DnaJ (375 aa).

Residues 5-70 (DYYSLLEVER…QKRAAYDRYG (66 aa)) enclose the J domain. A CR-type zinc finger spans residues 135–213 (GKTVDIEIDV…CHGEGRCEKH (79 aa)). Residues Cys148, Cys151, Cys165, Cys168, Cys187, Cys190, Cys201, and Cys204 each contribute to the Zn(2+) site. CXXCXGXG motif repeat units follow at residues 148-155 (CDACHGSG), 165-172 (CDTCHGSG), 187-194 (CPVCQGKG), and 201-208 (CPECHGEG).

Belongs to the DnaJ family. As to quaternary structure, homodimer. Requires Zn(2+) as cofactor.

The protein resides in the cytoplasm. In terms of biological role, participates actively in the response to hyperosmotic and heat shock by preventing the aggregation of stress-denatured proteins and by disaggregating proteins, also in an autonomous, DnaK-independent fashion. Unfolded proteins bind initially to DnaJ; upon interaction with the DnaJ-bound protein, DnaK hydrolyzes its bound ATP, resulting in the formation of a stable complex. GrpE releases ADP from DnaK; ATP binding to DnaK triggers the release of the substrate protein, thus completing the reaction cycle. Several rounds of ATP-dependent interactions between DnaJ, DnaK and GrpE are required for fully efficient folding. Also involved, together with DnaK and GrpE, in the DNA replication of plasmids through activation of initiation proteins. The polypeptide is Chaperone protein DnaJ (Zymomonas mobilis subsp. mobilis (strain ATCC 31821 / ZM4 / CP4)).